Consider the following 402-residue polypeptide: Choline dehydrogenase (402 aa).

Belongs to the iron-containing alcohol dehydrogenase family.

The enzyme catalyses choline + NAD(+) = betaine aldehyde + NADH + H(+). It functions in the pathway amine and polyamine biosynthesis; betaine biosynthesis via choline pathway; betaine aldehyde from choline (dehydrogenase route): step 1/1. Its function is as follows. Involved in the biosynthesis of the osmoprotectant glycine betaine from choline. This Bacillus subtilis (strain 168) protein is Choline dehydrogenase.